The sequence spans 127 residues: Holo-[acyl-carrier-protein] synthase (127 aa).

Positions 9 and 58 each coordinate Mg(2+).

It belongs to the P-Pant transferase superfamily. AcpS family. Mg(2+) is required as a cofactor.

Its subcellular location is the cytoplasm. The catalysed reaction is apo-[ACP] + CoA = holo-[ACP] + adenosine 3',5'-bisphosphate + H(+). Transfers the 4'-phosphopantetheine moiety from coenzyme A to a Ser of acyl-carrier-protein. In Shewanella baltica (strain OS185), this protein is Holo-[acyl-carrier-protein] synthase.